The sequence spans 359 residues: 3-isopropylmalate dehydrogenase (359 aa).

Residue 74 to 85 (GPKWGTGSVRPE) coordinates NAD(+). Substrate-binding residues include R92, R102, R131, and D220. D220, D245, and D249 together coordinate Mg(2+). 284–295 (GSAPDLPANKVN) is a binding site for NAD(+).

This sequence belongs to the isocitrate and isopropylmalate dehydrogenases family. As to quaternary structure, homodimer. The cofactor is Mg(2+). Mn(2+) serves as cofactor.

Its subcellular location is the cytoplasm. It catalyses the reaction (2R,3S)-3-isopropylmalate + NAD(+) = 4-methyl-2-oxopentanoate + CO2 + NADH. The protein operates within amino-acid biosynthesis; L-leucine biosynthesis; L-leucine from 3-methyl-2-oxobutanoate: step 3/4. In terms of biological role, catalyzes the oxidation of 3-carboxy-2-hydroxy-4-methylpentanoate (3-isopropylmalate) to 3-carboxy-4-methyl-2-oxopentanoate. The product decarboxylates to 4-methyl-2 oxopentanoate. This is 3-isopropylmalate dehydrogenase (LEU2) from Kluyveromyces marxianus (Yeast).